We begin with the raw amino-acid sequence, 156 residues long: Small ribosomal subunit protein uS7 (156 aa).

This sequence belongs to the universal ribosomal protein uS7 family. Part of the 30S ribosomal subunit. Contacts proteins S9 and S11.

One of the primary rRNA binding proteins, it binds directly to 16S rRNA where it nucleates assembly of the head domain of the 30S subunit. Is located at the subunit interface close to the decoding center, probably blocks exit of the E-site tRNA. This is Small ribosomal subunit protein uS7 from Laribacter hongkongensis (strain HLHK9).